Reading from the N-terminus, the 250-residue chain is 3-deoxy-manno-octulosonate cytidylyltransferase (250 aa).

It belongs to the KdsB family.

The protein resides in the cytoplasm. The catalysed reaction is 3-deoxy-alpha-D-manno-oct-2-ulosonate + CTP = CMP-3-deoxy-beta-D-manno-octulosonate + diphosphate. The protein operates within nucleotide-sugar biosynthesis; CMP-3-deoxy-D-manno-octulosonate biosynthesis; CMP-3-deoxy-D-manno-octulosonate from 3-deoxy-D-manno-octulosonate and CTP: step 1/1. It functions in the pathway bacterial outer membrane biogenesis; lipopolysaccharide biosynthesis. In terms of biological role, activates KDO (a required 8-carbon sugar) for incorporation into bacterial lipopolysaccharide in Gram-negative bacteria. The protein is 3-deoxy-manno-octulosonate cytidylyltransferase of Legionella pneumophila subsp. pneumophila (strain Philadelphia 1 / ATCC 33152 / DSM 7513).